The following is a 211-amino-acid chain: FMN-dependent NADH:quinone oxidoreductase (211 aa).

FMN is bound by residues S10 and 16–18; that span reads SVS.

The protein belongs to the azoreductase type 1 family. In terms of assembly, homodimer. Requires FMN as cofactor.

The catalysed reaction is 2 a quinone + NADH + H(+) = 2 a 1,4-benzosemiquinone + NAD(+). It carries out the reaction N,N-dimethyl-1,4-phenylenediamine + anthranilate + 2 NAD(+) = 2-(4-dimethylaminophenyl)diazenylbenzoate + 2 NADH + 2 H(+). In terms of biological role, quinone reductase that provides resistance to thiol-specific stress caused by electrophilic quinones. Also exhibits azoreductase activity. Catalyzes the reductive cleavage of the azo bond in aromatic azo compounds to the corresponding amines. This Parafrankia sp. (strain EAN1pec) protein is FMN-dependent NADH:quinone oxidoreductase.